Reading from the N-terminus, the 1124-residue chain is Regulator of nonsense transcripts 1 (1124 aa).

The tract at residues 1–410 is sufficient for interaction with RENT2; it reads MSVEAYGPSS…LRSSVGAPVE (410 aa). Ser-10 and Ser-31 each carry phosphoserine. The interval 39-69 is disordered; sequence TLPSQTQTPPGGPGGAGGPGGAGAGGAAGQL. Residues 51-66 are compositionally biased toward gly residues; the sequence is PGGAGGPGGAGAGGAA. Positions 110-267 constitute a Upf1 CH-rich domain; sequence TKDLPVHACS…NKLEELWKEN (158 aa). Cys-118, Cys-121, Cys-132, Ser-135, Cys-140, His-150, His-154, Cys-160, Cys-178, Cys-181, Cys-204, and Cys-208 together coordinate Zn(2+). Residues 118–150 form a C3H region; the sequence is CSYCGIHDPACVVYCNTSKKWFCNGRGNTSGSH. Residues 132–160 form a CC/SHH/C region; it reads CNTSKKWFCNGRGNTSGSHIVNHLVRAKC. The segment at 178-208 is C4; that stretch reads CYNCGCRNVFLLGFIPAKADSVVVLLCRQPC. Residues Gln-481 and 501 to 505 each bind ATP; that span reads GTGKT. Residue Ser-560 is modified to Phosphoserine. The ATP site is built by Gln-671, Tyr-708, and Glu-839. Position 951 is a phosphoserine (Ser-951). Disordered stretches follow at residues 1004–1053 and 1066–1091; these read FGQA…VASQ and SMSQ…YLGD. Residue Arg-1014 is modified to Omega-N-methylarginine. Residues 1020-1029 show a composition bias toward basic residues; the sequence is KTGRGGRQKN. Positions 1036 to 1053 are enriched in polar residues; it reads PSQTTLPNSQASQDVASQ. Positions 1066–1081 are enriched in low complexity; the sequence is SMSQPSQMSQPGLSQP. Phosphoserine occurs at positions 1084, 1102, 1105, and 1122. Short sequence motifs ([ST]-Q motif) lie at residues 1084–1085 and 1102–1103; these read SQ. A disordered region spans residues 1105 to 1124; sequence STYQGERAYQHGGVTGLSQY.

Belongs to the DNA2/NAM7 helicase family. In terms of assembly, found in a post-splicing messenger ribonucleoprotein (mRNP) complex. Associates with the exon junction complex (EJC). Associates with the SGM1C complex; is phosphorylated by the complex kinase component SGM1. Part of a complex composed of SMG1, DHX34 and UPF1; within the complex DHX34 acts as a scaffolding protein to facilitate SMG1 phosphorylation of UPF1. Interacts with UPF2. Interacts with UPF3A and UPF3B. Interacts with EST1A. Interacts with SLBP. Interacts (when hyperphosphorylated) with PNRC2. Interacts with AGO1 and AGO2. Interacts with GSPT2. Interacts with isoform 1 and isoform 5 of ADAR/ADAR1. Interacts with SMG7. Interacts with ZC3H12A; this interaction occurs in a mRNA translationally active- and termination-dependent manner and is essential for ZC3H12A-mediated degradation of target mRNAs. Interacts with CPSF6. Interacts with MOV10; the interaction is direct and RNA-dependent. Interacts with SHFL; the interaction increases in the presence of RNA. Interacts with UPF2 and DDX4; interactions are mediated by TDRD6. Interacts with DHX34 and PABPC1/PABP1; the interactions are RNA-independent. Interacts with RBM46. Phosphorylated by SMG1; required for formation of mRNA surveillance complexes. Localizes in male germ cells.

The protein resides in the cytoplasm. Its subcellular location is the P-body. The protein localises to the nucleus. It localises to the perinuclear region. The catalysed reaction is ATP + H2O = ADP + phosphate + H(+). Its function is as follows. RNA-dependent helicase required for nonsense-mediated decay (NMD) of aberrant mRNAs containing premature stop codons and modulates the expression level of normal mRNAs. Is recruited to mRNAs upon translation termination and undergoes a cycle of phosphorylation and dephosphorylation; its phosphorylation appears to be a key step in NMD. Recruited by release factors to stalled ribosomes together with the SMG1C protein kinase complex to form the transient SURF (SMG1-UPF1-eRF1-eRF3) complex. In EJC-dependent NMD, the SURF complex associates with the exon junction complex (EJC) (located 50-55 or more nucleotides downstream from the termination codon) through UPF2 and allows the formation of an UPF1-UPF2-UPF3 surveillance complex which is believed to activate NMD. Phosphorylated UPF1 is recognized by EST1B/SMG5, SMG6 and SMG7 which are thought to provide a link to the mRNA degradation machinery involving exonucleolytic and endonucleolytic pathways, and to serve as adapters to protein phosphatase 2A (PP2A), thereby triggering UPF1 dephosphorylation and allowing the recycling of NMD factors. UPF1 can also activate NMD without UPF2 or UPF3, and in the absence of the NMD-enhancing downstream EJC indicative for alternative NMD pathways. Plays a role in replication-dependent histone mRNA degradation at the end of phase S; the function is independent of UPF2. For the recognition of premature termination codons (PTC) and initiation of NMD a competitive interaction between UPF1 and PABPC1 with the ribosome-bound release factors is proposed. The ATPase activity of UPF1 is required for disassembly of mRNPs undergoing NMD. Together with UPF2 and dependent on TDRD6, mediates the degradation of mRNA harboring long 3'UTR by inducing the NMD machinery. Also capable of unwinding double-stranded DNA and translocating on single-stranded DNA. This chain is Regulator of nonsense transcripts 1, found in Mus musculus (Mouse).